A 360-amino-acid polypeptide reads, in one-letter code: Phosphoserine aminotransferase (360 aa).

Arg-41 serves as a coordination point for L-glutamate. Trp-101, Thr-152, Asp-172, and Gln-195 together coordinate pyridoxal 5'-phosphate. Lys-196 bears the N6-(pyridoxal phosphate)lysine mark. 237–238 (NT) serves as a coordination point for pyridoxal 5'-phosphate.

It belongs to the class-V pyridoxal-phosphate-dependent aminotransferase family. SerC subfamily. Homodimer. Pyridoxal 5'-phosphate serves as cofactor.

The protein localises to the cytoplasm. The enzyme catalyses O-phospho-L-serine + 2-oxoglutarate = 3-phosphooxypyruvate + L-glutamate. It carries out the reaction 4-(phosphooxy)-L-threonine + 2-oxoglutarate = (R)-3-hydroxy-2-oxo-4-phosphooxybutanoate + L-glutamate. The protein operates within amino-acid biosynthesis; L-serine biosynthesis; L-serine from 3-phospho-D-glycerate: step 2/3. It participates in cofactor biosynthesis; pyridoxine 5'-phosphate biosynthesis; pyridoxine 5'-phosphate from D-erythrose 4-phosphate: step 3/5. Its function is as follows. Catalyzes the reversible conversion of 3-phosphohydroxypyruvate to phosphoserine and of 3-hydroxy-2-oxo-4-phosphonooxybutanoate to phosphohydroxythreonine. The protein is Phosphoserine aminotransferase of Burkholderia cenocepacia (strain ATCC BAA-245 / DSM 16553 / LMG 16656 / NCTC 13227 / J2315 / CF5610) (Burkholderia cepacia (strain J2315)).